Here is a 2377-residue protein sequence, read N- to C-terminus: Serine/threonine-protein kinase WNK1 (2377 aa).

Disordered regions lie at residues 1 to 79 (MSDG…RFFR) and 93 to 203 (LPGL…QQDD). Phosphothreonine occurs at positions 17 and 58. Over residues 48-64 (RTEEYRRRRHTMDKDSR) the composition is skewed to basic and acidic residues. Composition is skewed to low complexity over residues 101–111 (PQPSVPAVVPQ) and 127–141 (VASQVSQQPSAAASP). The segment covering 149-158 (SATTTVPSST) has biased composition (polar residues). A phosphoserine mark is found at Ser165 and Ser172. The 259-residue stretch at 221-479 (LKFDIEIGRG…IKDLLNHAFF (259 aa)) folds into the Protein kinase domain. Ser231 provides a ligand contact to ATP. Phe283 and Leu299 together coordinate chloride. Residues 301 to 304 (TELM) and Lys351 each bind ATP. Asp368 acts as the Proton acceptor in catalysis. Positions 369 and 371 each coordinate chloride. Phosphoserine; by autocatalysis is present on residues Ser378 and Ser382. The autoinhibitory domain stretch occupies residues 488-555 (ELAEEDDGEK…VCEGDHKTMA (68 aa)). A compositionally biased stretch (basic and acidic residues) spans 573–588 (QLVREEQEKRKQEESS). Disordered stretches follow at residues 573 to 782 (QLVR…SAGT) and 1013 to 1114 (PAVS…SRPK). Polar residues-rich tracts occupy residues 593 to 628 (NEQQASVSQAGIQQLSAASTGIPTAPATSASVSTQV), 638 to 705 (HQQL…QSQP), and 713 to 733 (SMAQGQNQGQPSSSLAGVLSS). The segment at 629 to 639 (EPEEPEADQHQ) is interaction with KLHL3. Positions 734–746 (QPIQHPQQQGIQP) are enriched in low complexity. A compositionally biased stretch (polar residues) spans 747-782 (TVPSQQAVQYSLPQAASSSEGTTAQPVSQPQVSAGT). Residues 1018–1028 (TQQPPTTSSQQ) show a composition bias toward low complexity. The span at 1029-1038 (AVLESTQGVS) shows a compositional bias: polar residues. The span at 1042-1058 (PPEQTPITQSQPTQPVP) shows a compositional bias: low complexity. The span at 1075 to 1085 (SDGNENAPSSS) shows a compositional bias: polar residues. Residues 1093-1114 (TKRHYRKSVRSRSRHEKTSRPK) show a composition bias toward basic residues. The RFXV motif 1 motif lies at 1252 to 1255 (RFIV). The residue at position 1256 (Ser1256) is a Phosphoserine. Disordered stretches follow at residues 1726–1760 (GQVSTPGTHASAPVGTATGVKPGTTPPKPTKTVVP) and 1818–1847 (TMSSTTVTEAGTRLQKDGTEGHVTATSSGA). Residues 1738–1748 (PVGTATGVKPG) are compositionally biased toward low complexity. Thr1843 carries the phosphothreonine modification. Positions 1854-1857 (RFQV) match the RFXV motif 2 motif. The tract at residues 1860-1945 (TMDDAQKERK…TKVGRFQVTT (86 aa)) is disordered. Positions 1863-1879 (DAQKERKNRSEDTKSVH) are enriched in basic and acidic residues. Residues 1882–1900 (SSTSESSVLSSSSPESTLV) are compositionally biased toward low complexity. 2 consecutive short sequence motifs (RFXV motif) follow at residues 1940–1943 (RFQV) and 1952–1955 (RFSV). The segment covering 1959-1969 (EDKVTELKKEG) has biased composition (basic and acidic residues). Disordered stretches follow at residues 1959–1984 (EDKVTELKKEGPVTSPPFRDSEQTVI), 1989–2008 (PKKEKPELAEPSHLNGPSSD), 2015–2064 (SRGT…DIED), 2107–2191 (VIIP…NLYS), and 2203–2239 (SLSAPGQGTSSTNTVGGTVSSQAAQAQPPAMTSSRKG). Residue Ser1973 is modified to Phosphoserine. The segment covering 1989-1998 (PKKEKPELAE) has biased composition (basic and acidic residues). Phosphoserine occurs at positions 2006, 2007, 2022, 2024, and 2027. Over residues 2035–2057 (SLPVQNLSQSLSNSFNSSYMSSD) the composition is skewed to low complexity. At Ser2116 the chain carries Phosphoserine. Basic residues predominate over residues 2117–2129 (GRRRRPTKSKGSK). A compositionally biased stretch (low complexity) spans 2130-2140 (SSRSSSLGNKS). Residues 2141 to 2191 (PQLSGNLSGQSGTSVLHPQQTLHPAGNTPETGHNQLLQPLKPSPSSDNLYS) are compositionally biased toward polar residues. Residues 2208–2232 (GQGTSSTNTVGGTVSSQAAQAQPPA) are compositionally biased toward low complexity. The segment at 2236 to 2256 (SRKGTFTDDLHKLVDNWARDA) is amphipathic alpha-helix. A phosphoserine mark is found at Ser2265 and Ser2281. The tract at residues 2325–2344 (PAPFGTQWSGTGGPAPQPLG) is disordered. Residues Ser2365 and Ser2367 each carry the phosphoserine modification.

This sequence belongs to the protein kinase superfamily. Ser/Thr protein kinase family. WNK subfamily. In terms of assembly, interacts with WNK3. Interacts with WNK4; inhibiting the activity of WNK4. Interacts with SGK1; promoting its activation. Associates with the mTORC2 complex. Interacts with UVRAG. Interacts with isoform 1; inhibiting isoform 1 activity. Mg(2+) is required as a cofactor. In terms of processing, autophosphorylated at Ser-378 and Ser-382, promoting its activity. Autophosphorylation at Ser-382 is inhibited by intracellular calcium. Phosphorylation at Thr-58 increases ability to activate SGK1. Ubiquitinated by the BCR(KLHL3) complex, leading to its degradation. Also ubiquitinated by the BCR(KLHL2) complex. Post-translationally, may be O-glycosylated. As to expression, widely expressed in both adult and embryonic tissue, with highest levels observed in the testis and lower levels in heart, lung, kidney, placenta, brain and skeletal muscle. Expressed in pancreatic duct. Two isoforms are expressed in heart, a single shorter isoform in the kidney. Locates to the distal convoluted tubule, the medullary collecting duct and the cortical collecting duct of the kidney. Restricted to the nervous system, expressed preferentially in sensory neurons than in motor neurons and in general more abundant in axons than in cell bodies (at protein level). In the DRG, predominantly expressed in the satellite cells that envelop sensory neurons, but low expression also observed in the cell bodies of neurons (at protein level). In the sciatic nerve, expressed in the Schwann cells that surround axons and in a mosaic distribution of axons (at protein level). In the spinal cord, expressed in superficial layers (LI and LII), as well as in the fibers of the Lissauer tract (at protein level). Also detected in the axon fibers of dorsolateral funiculus and lateral funiculus (at protein level).

The protein resides in the cytoplasm. It is found in the nucleus. The protein localises to the cytoskeleton. It localises to the spindle. It carries out the reaction L-seryl-[protein] + ATP = O-phospho-L-seryl-[protein] + ADP + H(+). The enzyme catalyses L-threonyl-[protein] + ATP = O-phospho-L-threonyl-[protein] + ADP + H(+). Activated in response to hyperosmotic stress: cell shrinkage promotes formation of a membraneless compartment that concentrates WNK1 with its substrates, OXSR1/OSR1 and STK39/SPAK. Activation requires autophosphorylation of Ser-382 and, to a lower extent, Ser-378. Autophosphorylation and subsequent activation is inhibited by increases in intracellular ionic strength: Cl(-) potently inhibits WNK1 kinase activity via direct binding. Also inhibited by K(+) ions. Its function is as follows. Serine/threonine-protein kinase component of the WNK1-SPAK/OSR1 kinase cascade, which acts as a key regulator of blood pressure and regulatory volume increase by promoting ion influx. WNK1 mediates regulatory volume increase in response to hyperosmotic stress by acting as a molecular crowding sensor, which senses cell shrinkage and mediates formation of a membraneless compartment by undergoing liquid-liquid phase separation. The membraneless compartment concentrates WNK1 with its substrates, OXSR1/OSR1 and STK39/SPAK, promoting WNK1-dependent phosphorylation and activation of downstream kinases OXSR1/OSR1 and STK39/SPAK. Following activation, OXSR1/OSR1 and STK39/SPAK catalyze phosphorylation of ion cotransporters SLC12A1/NKCC2, SLC12A2/NKCC1, SLC12A5/KCC2 and SLC12A6/KCC3, regulating their activity. Phosphorylation of Na-K-Cl cotransporters SLC12A2/NKCC1 and SLC12A2/NKCC1 promote their activation and ion influx; simultaneously, phosphorylation of K-Cl cotransporters SLC12A5/KCC2 and SLC12A6/KCC3 inhibit their activity, blocking ion efflux. Also acts as a regulator of angiogenesis in endothelial cells. Also acts independently of the WNK1-SPAK/OSR1 kinase cascade by catalyzing phosphorylation of other substrates, such as SYT2, PCF11 and NEDD4L. Mediates phosphorylation of SYT2, regulating SYT2 association with phospholipids and membrane-binding. Regulates mRNA export in the nucleus by mediating phosphorylation of PCF11, thereby decreasing the association between PCF11 and POLR2A/RNA polymerase II and promoting mRNA export to the cytoplasm. Acts as a negative regulator of autophagy. Required for the abscission step during mitosis, independently of the WNK1-SPAK/OSR1 kinase cascade. WNK1 may also play a role in actin cytoskeletal reorganization. Also acts as a scaffold protein independently of its protein kinase activity: negatively regulates cell membrane localization of various transporters and channels, such as SLC4A4, SLC26A6, SLC26A9, TRPV4 and CFTR. Involved in the regulation of epithelial Na(+) channel (ENaC) by promoting activation of SGK1 in a kinase-independent manner: probably acts as a scaffold protein that promotes the recruitment of SGK1 to the mTORC2 complex in response to chloride, leading to mTORC2-dependent phosphorylation and activation of SGK1. Acts as an assembly factor for the ER membrane protein complex independently of its protein kinase activity: associates with EMC2 in the cytoplasm via its amphipathic alpha-helix, and prevents EMC2 ubiquitination and subsequent degradation, thereby promoting EMC2 stabilization. Kinase-defective isoform specifically expressed in kidney, which acts as a dominant-negative regulator of the longer isoform 1. Does not directly inhibit WNK4 and has no direct effect on sodium and chloride ion transport. Down-regulates sodium-chloride cotransporter activity indirectly by inhibiting isoform 1, it associates with isoform 1 and attenuates its kinase activity. In kidney, may play an important role regulating sodium and potassium balance. This Mus musculus (Mouse) protein is Serine/threonine-protein kinase WNK1.